A 427-amino-acid chain; its full sequence is BTB/POZ domain-containing protein KCTD16 (427 aa).

The BTB domain maps to Glu-25–Asp-98. Tyr-112 carries the post-translational modification Phosphotyrosine. Ser-130, Ser-137, Ser-143, and Ser-146 each carry phosphoserine.

Homopentamer; forms an open pentamer. In contrast to other BTB domain-containing proteins, does not interact with CUL3. Interacts as a tetramer with GABBR1 and GABBR2. In terms of tissue distribution, expressed in the brain, mainly in the hippocampus.

Its subcellular location is the presynaptic cell membrane. It localises to the postsynaptic cell membrane. Its function is as follows. Auxiliary subunit of GABA-B receptors that determine the pharmacology and kinetics of the receptor response. Increases agonist potency and markedly alter the G-protein signaling of the receptors by accelerating onset and promoting desensitization. The polypeptide is BTB/POZ domain-containing protein KCTD16 (Kctd16) (Mus musculus (Mouse)).